The primary structure comprises 275 residues: Probable dual specificity protein phosphatase DDB_G0271350 (275 aa).

Residues 2–143 enclose the Tyrosine-protein phosphatase domain; that stretch reads GISMILDNFL…LCDLELKLTN (142 aa). Residue Cys-87 is the Phosphocysteine intermediate of the active site.

It belongs to the protein-tyrosine phosphatase family. Non-receptor class dual specificity subfamily.

The enzyme catalyses O-phospho-L-tyrosyl-[protein] + H2O = L-tyrosyl-[protein] + phosphate. It catalyses the reaction O-phospho-L-seryl-[protein] + H2O = L-seryl-[protein] + phosphate. The catalysed reaction is O-phospho-L-threonyl-[protein] + H2O = L-threonyl-[protein] + phosphate. Its function is as follows. Has a dual specificity toward Ser/Thr and Tyr-containing proteins. In Dictyostelium discoideum (Social amoeba), this protein is Probable dual specificity protein phosphatase DDB_G0271350.